The chain runs to 551 residues: mRNA cap guanine-N(7) methyltransferase (551 aa).

The span at 1–10 (MENRSSSGTP) shows a compositional bias: polar residues. The segment at 1–152 (MENRSSSGTP…DRETLRRRQE (152 aa)) is disordered. Basic and acidic residues-rich tracts occupy residues 48 to 76 (VTEE…EERH) and 141 to 152 (LVDRETLRRRQE). Positions 194 to 551 (SKIKGLRSFN…FYHAFCFYKV (358 aa)) constitute an mRNA cap 0 methyltransferase domain. 203–204 (NN) serves as a coordination point for mRNA. S-adenosyl-L-methionine-binding positions include Lys207, Gly250, Asp274, Asp312, 355-357 (MFA), and Tyr360. The disordered stretch occupies residues 407–430 (KAREEQEKKEKSDEAPEDGEVEED). Residues 408-420 (AREEQEKKEKSDE) are compositionally biased toward basic and acidic residues. The segment covering 421 to 430 (APEDGEVEED) has biased composition (acidic residues).

This sequence belongs to the class I-like SAM-binding methyltransferase superfamily. mRNA cap 0 methyltransferase family.

Its subcellular location is the nucleus. It carries out the reaction a 5'-end (5'-triphosphoguanosine)-ribonucleoside in mRNA + S-adenosyl-L-methionine = a 5'-end (N(7)-methyl 5'-triphosphoguanosine)-ribonucleoside in mRNA + S-adenosyl-L-homocysteine. Responsible for methylating the 5'-cap structure of mRNAs. The protein is mRNA cap guanine-N(7) methyltransferase (abd1) of Aspergillus clavatus (strain ATCC 1007 / CBS 513.65 / DSM 816 / NCTC 3887 / NRRL 1 / QM 1276 / 107).